The chain runs to 294 residues: 2-oxo-3-(phosphooxy)propyl 3-oxoalkanoate synthase (294 aa).

The protein belongs to the AfsA family.

It carries out the reaction a medium-chain 3-oxoacyl-[ACP] + dihydroxyacetone phosphate = a (4-alkanoyl-5-oxo-2,5-dihydrofuran-3-yl)methyl phosphate + holo-[ACP] + H2O. Its function is as follows. Involved in the biosynthesis of virginiae butanolide (VB), a gamma-butyrolactone autoregulator that triggers the production of the streptogramin antibiotic virginiamycin. The polypeptide is 2-oxo-3-(phosphooxy)propyl 3-oxoalkanoate synthase (Streptomyces virginiae (Streptomyces cinnamonensis)).